The primary structure comprises 61 residues: Metallothionein-2 (61 aa).

Position 1 is an N-acetylmethionine (methionine 1). Positions 1–29 are beta; it reads MDPNCSCATDGSCSCSGSCKCKECKCTTC. 18 residues coordinate a divalent metal cation: cysteine 5, cysteine 7, cysteine 13, cysteine 15, cysteine 19, cysteine 21, cysteine 24, cysteine 26, cysteine 29, cysteine 33, cysteine 34, cysteine 36, cysteine 37, cysteine 41, cysteine 44, cysteine 48, cysteine 50, and cysteine 57. The segment at 30 to 61 is alpha; the sequence is KKSCCSCCPVGCAKCSQGCVCKEASEKCSCCA. Phosphoserine is present on serine 58. 2 residues coordinate a divalent metal cation: cysteine 59 and cysteine 60.

The protein belongs to the metallothionein superfamily. Type 1 family.

Metallothioneins have a high content of cysteine residues that bind various heavy metals; these proteins are transcriptionally regulated by both heavy metals and glucocorticoids. This chain is Metallothionein-2 (MT2), found in Mesocricetus auratus (Golden hamster).